We begin with the raw amino-acid sequence, 147 residues long: Hordoindoline-B1 (147 aa).

The first 19 residues, 1-19, serve as a signal peptide directing secretion; that stretch reads MKTLFLLAILALVASTTFA. The propeptide occupies 20–28; sequence QYSVGGGYN.

Post-translationally, five disulfide bonds are present. As to expression, found in endosperm and aleurone layer of developing kernels, but not in the embryo.

Its subcellular location is the membrane. The protein localises to the secreted. It localises to the extracellular space. Its function is as follows. Acts as a membranotoxin, probably through its antibacterial and antifungal activities, contributing to the defense mechanism of the plant against predators. Forms monovalent cation-selective ion channels in membranes. Contributes to grain texture and hardness. This chain is Hordoindoline-B1 (HINB-1), found in Hordeum vulgare (Barley).